A 588-amino-acid chain; its full sequence is Oxidoreductase NdmD (588 aa).

The region spanning W9–T114 is the Rieske domain. [2Fe-2S] cluster is bound by residues C50, H52, C69, and H72. Residues P272 to V373 enclose the FAD-binding FR-type domain. Residues Y503–L588 form the 2Fe-2S ferredoxin-type domain. Residues C537, C542, C545, and C575 each contribute to the [2Fe-2S] cluster site.

The cofactor is [2Fe-2S] cluster.

Its function is as follows. Involved in the caffeine degradation, which is the essential first step for assimilating the carbon and nitrogen in caffeine. Catalyzes the oxidation of NADH and transfers electrons to NdmA and NdmB, which catalyze the N-demethylation reactions. This is Oxidoreductase NdmD (ndmD) from Pseudomonas putida (Arthrobacter siderocapsulatus).